We begin with the raw amino-acid sequence, 241 residues long: Triosephosphate isomerase (241 aa).

9–11 (NWK) serves as a coordination point for substrate. Histidine 96 serves as the catalytic Electrophile. The active-site Proton acceptor is glutamate 165. Substrate-binding positions include glycine 171, serine 204, and 225 to 226 (GG).

This sequence belongs to the triosephosphate isomerase family. Homodimer.

It localises to the cytoplasm. It carries out the reaction D-glyceraldehyde 3-phosphate = dihydroxyacetone phosphate. It participates in carbohydrate biosynthesis; gluconeogenesis. The protein operates within carbohydrate degradation; glycolysis; D-glyceraldehyde 3-phosphate from glycerone phosphate: step 1/1. Functionally, involved in the gluconeogenesis. Catalyzes stereospecifically the conversion of dihydroxyacetone phosphate (DHAP) to D-glyceraldehyde-3-phosphate (G3P). In Nostoc sp. (strain PCC 7120 / SAG 25.82 / UTEX 2576), this protein is Triosephosphate isomerase.